A 361-amino-acid polypeptide reads, in one-letter code: Phosphoserine aminotransferase (361 aa).

An L-glutamate-binding site is contributed by arginine 43. Pyridoxal 5'-phosphate contacts are provided by residues 77–78 (AS), tryptophan 103, threonine 152, aspartate 172, and glutamine 195. The residue at position 196 (lysine 196) is an N6-(pyridoxal phosphate)lysine. 237–238 (NT) serves as a coordination point for pyridoxal 5'-phosphate.

It belongs to the class-V pyridoxal-phosphate-dependent aminotransferase family. SerC subfamily. In terms of assembly, homodimer. Requires pyridoxal 5'-phosphate as cofactor.

It is found in the cytoplasm. It catalyses the reaction O-phospho-L-serine + 2-oxoglutarate = 3-phosphooxypyruvate + L-glutamate. It carries out the reaction 4-(phosphooxy)-L-threonine + 2-oxoglutarate = (R)-3-hydroxy-2-oxo-4-phosphooxybutanoate + L-glutamate. The protein operates within amino-acid biosynthesis; L-serine biosynthesis; L-serine from 3-phospho-D-glycerate: step 2/3. It functions in the pathway cofactor biosynthesis; pyridoxine 5'-phosphate biosynthesis; pyridoxine 5'-phosphate from D-erythrose 4-phosphate: step 3/5. In terms of biological role, catalyzes the reversible conversion of 3-phosphohydroxypyruvate to phosphoserine and of 3-hydroxy-2-oxo-4-phosphonooxybutanoate to phosphohydroxythreonine. The protein is Phosphoserine aminotransferase of Desulfatibacillum aliphaticivorans.